Here is a 267-residue protein sequence, read N- to C-terminus: Protein PERCC1 (267 aa).

Disordered stretches follow at residues 19–88, 142–163, and 247–267; these read HHPF…QLLR, SLED…RPGL, and ACPE…PAEA. A compositionally biased stretch (acidic residues) spans 28–50; that stretch reads EPPETSEEEEEEEEEEEEEEGEG. The span at 74–83 shows a compositional bias: low complexity; sequence PEGPGSPETP.

Its function is as follows. Plays a critical role in intestinal function. Acts by promoting the development of enteroendocrine cells (EECs) of the gastrointestinal tract and pancreas. It is thereby required for normal enteroendocrine peptide hormone secretion. The chain is Protein PERCC1 from Homo sapiens (Human).